The following is a 366-amino-acid chain: Peptide chain release factor 2 (366 aa).

Q251 bears the N5-methylglutamine mark.

It belongs to the prokaryotic/mitochondrial release factor family. Methylated by PrmC. Methylation increases the termination efficiency of RF2.

The protein resides in the cytoplasm. Peptide chain release factor 2 directs the termination of translation in response to the peptide chain termination codons UGA and UAA. The chain is Peptide chain release factor 2 (prfB) from Listeria monocytogenes serotype 4b (strain F2365).